Here is a 139-residue protein sequence, read N- to C-terminus: Translation initiation factor 5A (139 aa).

Lys36 carries the post-translational modification Hypusine.

Belongs to the eIF-5A family.

Its subcellular location is the cytoplasm. Its function is as follows. Functions by promoting the formation of the first peptide bond. The sequence is that of Translation initiation factor 5A (eif5a) from Aeropyrum pernix (strain ATCC 700893 / DSM 11879 / JCM 9820 / NBRC 100138 / K1).